Reading from the N-terminus, the 149-residue chain is ATP synthase epsilon chain (149 aa).

2 stretches are compositionally biased toward basic and acidic residues: residues 99 to 116 (DVER…RLEE) and 123 to 134 (RETHEAARDRAR). Residues 99-149 (DVERAESAEERAKRRLEEGVQEEERETHEAARDRARNRLRVAMGKVGTRQS) form a disordered region.

Belongs to the ATPase epsilon chain family. As to quaternary structure, F-type ATPases have 2 components, CF(1) - the catalytic core - and CF(0) - the membrane proton channel. CF(1) has five subunits: alpha(3), beta(3), gamma(1), delta(1), epsilon(1). CF(0) has three main subunits: a, b and c.

Its subcellular location is the cell inner membrane. Its function is as follows. Produces ATP from ADP in the presence of a proton gradient across the membrane. The polypeptide is ATP synthase epsilon chain (Salinibacter ruber (strain DSM 13855 / M31)).